The following is a 28-amino-acid chain: Ranatuerin-2SEc (28 aa).

A disulfide bridge links Cys-23 with Cys-28.

Expressed by the skin glands.

It localises to the secreted. Functionally, mast cell degranulating peptide. Causes histamine release from rat peritoneal mast cells in vitro. Has antibacterial activity against the Gram-negative bacterium E.coli K12 and Gram-positive bacterium M.luteus NCT C2665. This chain is Ranatuerin-2SEc, found in Lithobates sevosus (Dusky gopher frog).